Reading from the N-terminus, the 464-residue chain is tRNA modification GTPase MnmE (464 aa).

Positions 27, 89, and 128 each coordinate (6S)-5-formyl-5,6,7,8-tetrahydrofolate. The region spanning 225–384 (GLATAIVGRP…LEETIAHLFF (160 aa)) is the TrmE-type G domain. Residue Asn235 participates in K(+) binding. GTP contacts are provided by residues 235–240 (NVGKSS), 254–260 (TDVAGTT), and 279–282 (DTAG). Mg(2+) is bound at residue Ser239. K(+)-binding residues include Thr254, Val256, and Thr259. Residue Thr260 coordinates Mg(2+). A (6S)-5-formyl-5,6,7,8-tetrahydrofolate-binding site is contributed by Lys464.

The protein belongs to the TRAFAC class TrmE-Era-EngA-EngB-Septin-like GTPase superfamily. TrmE GTPase family. In terms of assembly, homodimer. Heterotetramer of two MnmE and two MnmG subunits. It depends on K(+) as a cofactor.

It localises to the cytoplasm. In terms of biological role, exhibits a very high intrinsic GTPase hydrolysis rate. Involved in the addition of a carboxymethylaminomethyl (cmnm) group at the wobble position (U34) of certain tRNAs, forming tRNA-cmnm(5)s(2)U34. This is tRNA modification GTPase MnmE from Levilactobacillus brevis (strain ATCC 367 / BCRC 12310 / CIP 105137 / JCM 1170 / LMG 11437 / NCIMB 947 / NCTC 947) (Lactobacillus brevis).